An 89-amino-acid polypeptide reads, in one-letter code: Albumin-1 (89 aa).

Ala1 is a signal peptide. Intrachain disulfides connect Cys4–Cys21, Cys8–Cys23, and Cys16–Cys33. Residues 39 to 46 (LSSVAKMI) constitute a propeptide that is removed on maturation.

Post-translationally, the C-terminal glycine may be removed from A1b.

In terms of biological role, A1b binds to basic 7S globulin (BG) and stimulates its phosphorylation activity. The sequence is that of Albumin-1 (LEG) from Vigna radiata var. radiata (Mung bean).